The primary structure comprises 428 residues: Palmitoyltransferase pfa4 (428 aa).

Residues 1–10 (MLCRSFNISQ) lie on the Cytoplasmic side of the membrane. The chain crosses the membrane as a helical span at residues 11-31 (LAIPFVSVLISFLAYTSQLFF). Over 32-43 (YYFEEAPLRSEE) the chain is Lumenal. The chain crosses the membrane as a helical span at residues 44–61 (FWRLNIFAVCIWVCYYRA). Over 62-134 (CTVDPGRIPK…SNCVSHFTYP (73 aa)) the chain is Cytoplasmic. In terms of domain architecture, DHHC spans 91 to 141 (RWCRRCEAFKPPRAHHCKTCQRCIPKMDHHCPWTSNCVSHFTYPHFMRFLF). The active-site S-palmitoyl cysteine intermediate is the Cys-121. The chain crosses the membrane as a helical span at residues 135-155 (HFMRFLFYAVVGMGYLETLLF). Residues 156-177 (ERASIVWASRHLPSYLGPGLGQ) lie on the Lumenal side of the membrane. The chain crosses the membrane as a helical span at residues 178 to 198 (LVHLFILLVVNSLTWLALFIL). At 199–428 (LLRSIWSLAL…GILMQRRRQQ (230 aa)) the chain is on the cytoplasmic side. Residues 339 to 400 (QRSNDASHSG…WKNSEGDRLR (62 aa)) form a disordered region. The span at 360–373 (DRFNENKAKERLSE) shows a compositional bias: basic and acidic residues. Residues 374–388 (SESDFSDDEEVQDGE) are compositionally biased toward acidic residues. A compositionally biased stretch (basic and acidic residues) spans 389–400 (EGWKNSEGDRLR).

Belongs to the DHHC palmitoyltransferase family. PFA4 subfamily.

It localises to the endoplasmic reticulum membrane. The enzyme catalyses L-cysteinyl-[protein] + hexadecanoyl-CoA = S-hexadecanoyl-L-cysteinyl-[protein] + CoA. In terms of biological role, mediates the reversible addition of palmitate to target proteins, thereby regulating their membrane association and biological function. This chain is Palmitoyltransferase pfa4, found in Aspergillus fumigatus (strain ATCC MYA-4609 / CBS 101355 / FGSC A1100 / Af293) (Neosartorya fumigata).